Reading from the N-terminus, the 755-residue chain is Lysosome membrane protein 2-B (755 aa).

Residues 1–6 lie on the Cytoplasmic side of the membrane; the sequence is MKHIGR. The helical transmembrane segment at 7 to 27 threads the bilayer; sequence IVSFPIGLVLIAVGIIIFVVV. Asn28, Asn76, Asn379, Asn465, Asn497, Asn588, Asn607, and Asn680 each carry an N-linked (GlcNAc...) asparagine glycan. Over 28 to 727 the chain is Lumenal; sequence NRTIKDEFKK…AYKVDSFRYA (700 aa). The chain crosses the membrane as a helical span at residues 728-748; it reads ITVILIVVGGFLSLISGGLFV. Residues 749-755 lie on the Cytoplasmic side of the membrane; that stretch reads LDKIIDL. The Di-leucine motif signature appears at 752-753; it reads II.

Belongs to the CD36 family. Heavily glycosylated.

The protein localises to the lysosome membrane. Its function is as follows. May act as a lysosomal receptor. May be involved in macropinocytosis and fluid phase exocytosis. The chain is Lysosome membrane protein 2-B (lmpB) from Dictyostelium discoideum (Social amoeba).